A 388-amino-acid chain; its full sequence is Succinate--CoA ligase [ADP-forming] subunit beta (388 aa).

An ATP-grasp domain is found at 9–244 (KQLFARYGLP…QSQEDPREAQ (236 aa)). Residues K46, 53–55 (GRG), E99, T102, and E107 each bind ATP. N199 and D213 together coordinate Mg(2+). Substrate is bound by residues N264 and 321–323 (GIV).

It belongs to the succinate/malate CoA ligase beta subunit family. As to quaternary structure, heterotetramer of two alpha and two beta subunits. The cofactor is Mg(2+).

The enzyme catalyses succinate + ATP + CoA = succinyl-CoA + ADP + phosphate. It carries out the reaction GTP + succinate + CoA = succinyl-CoA + GDP + phosphate. Its pathway is carbohydrate metabolism; tricarboxylic acid cycle; succinate from succinyl-CoA (ligase route): step 1/1. Succinyl-CoA synthetase functions in the citric acid cycle (TCA), coupling the hydrolysis of succinyl-CoA to the synthesis of either ATP or GTP and thus represents the only step of substrate-level phosphorylation in the TCA. The beta subunit provides nucleotide specificity of the enzyme and binds the substrate succinate, while the binding sites for coenzyme A and phosphate are found in the alpha subunit. The protein is Succinate--CoA ligase [ADP-forming] subunit beta of Shigella boydii serotype 18 (strain CDC 3083-94 / BS512).